Consider the following 360-residue polypeptide: MTTISAPSEPYRAVRWWLISVAALIALMVLVGGATRLTESGLSIVEWKLVTGSLPPLSAAQWTEAFEAYKKIPQYRELNAGMSLSEFKEIFWWEWSHRLLGRFIGVAYLLPFLFFLWRGGLSRELKRRLWLLFALGGLQGAVGWWMVASGLSERVEVSQYRLATHLVLALLIFAGIVWTVRRLKERAQIAAPARLRFTSALLLVVTFVQIYLGALVAGLRAGRAYNTWPEIDGALIPSAERLWFETPWWRNMFDNVLTVQFEHRMTAYALFVLAALHAFDAVRSRAGLAASGALWLFAAVSLQAVLGILTLLNQVPIGLALAHQAVAIAVLTLAVMQTERLASRQSAETQPRVVPVSQPG.

Helical transmembrane passes span 13–33 (AVRWWLISVAALIALMVLVGG), 99–119 (LLGRFIGVAYLLPFLFFLWRG), 129–149 (LWLLFALGGLQGAVGWWMVAS), 160–180 (YRLATHLVLALLIFAGIVWTV), and 199–219 (SALLLVVTFVQIYLGALVAGL). Residue histidine 263 participates in heme binding. The next 3 membrane-spanning stretches (helical) occupy residues 265–282 (MTAYALFVLAALHAFDAV), 292–312 (GALWLFAAVSLQAVLGILTLL), and 315–335 (VPIGLALAHQAVAIAVLTLAV). Histidine 323 is a heme binding site.

The protein belongs to the COX15/CtaA family. Type 2 subfamily. As to quaternary structure, interacts with CtaB. Requires heme b as cofactor.

The protein localises to the cell membrane. It catalyses the reaction Fe(II)-heme o + 2 A + H2O = Fe(II)-heme a + 2 AH2. The protein operates within porphyrin-containing compound metabolism; heme A biosynthesis; heme A from heme O: step 1/1. Catalyzes the conversion of heme O to heme A by two successive hydroxylations of the methyl group at C8. The first hydroxylation forms heme I, the second hydroxylation results in an unstable dihydroxymethyl group, which spontaneously dehydrates, resulting in the formyl group of heme A. The sequence is that of Heme A synthase from Bradyrhizobium diazoefficiens (strain JCM 10833 / BCRC 13528 / IAM 13628 / NBRC 14792 / USDA 110).